The sequence spans 403 residues: tRNA pseudouridine synthase D (403 aa).

Over residues Met-1–Ile-10 the composition is skewed to basic and acidic residues. The tract at residues Met-1–Gln-24 is disordered. The active-site Nucleophile is the Asp-92. The TRUD domain occupies Gly-192–Leu-354. Residues Ala-217–Asn-240 form a disordered region.

The protein belongs to the pseudouridine synthase TruD family.

The enzyme catalyses uridine(13) in tRNA = pseudouridine(13) in tRNA. In terms of biological role, responsible for synthesis of pseudouridine from uracil-13 in transfer RNAs. The protein is tRNA pseudouridine synthase D of Psychrobacter arcticus (strain DSM 17307 / VKM B-2377 / 273-4).